The following is a 116-amino-acid chain: Methionine-R-sulfoxide reductase B1 (116 aa).

Positions 1-106 constitute a MsrB domain; it reads MSFCSFFGGE…FSSSLKFIPK (106 aa). 4 residues coordinate Zn(2+): C23, C26, C71, and C74. The active-site Nucleophile is the U95. U95 is a non-standard amino acid (selenocysteine).

It belongs to the MsrB Met sulfoxide reductase family. Zn(2+) serves as cofactor. In terms of processing, truncated MSRB1/SEPX1 proteins produced by failed UGA/Sec decoding are ubiquitinated by the CRL2(FEM1C) E3 ubiquitin-protein ligase complex.

The protein resides in the cytoplasm. It is found in the nucleus. The protein localises to the cytoskeleton. It catalyses the reaction L-methionyl-[protein] + [thioredoxin]-disulfide + H2O = L-methionyl-(R)-S-oxide-[protein] + [thioredoxin]-dithiol. It carries out the reaction [thioredoxin]-disulfide + L-methionine + H2O = L-methionine (R)-S-oxide + [thioredoxin]-dithiol. Its function is as follows. Methionine-sulfoxide reductase that specifically reduces methionine (R)-sulfoxide back to methionine. While in many cases, methionine oxidation is the result of random oxidation following oxidative stress, methionine oxidation is also a post-translational modification that takes place on specific residue. Acts as a regulator of actin assembly by reducing methionine (R)-sulfoxide mediated by MICALs (MICAL1, MICAL2 or MICAL3) on actin, thereby promoting filament repolymerization. Plays a role in innate immunity by reducing oxidized actin, leading to actin repolymerization in macrophages. This Bos taurus (Bovine) protein is Methionine-R-sulfoxide reductase B1 (MSRB1).